We begin with the raw amino-acid sequence, 296 residues long: Giardin subunit alpha-4 (296 aa).

Annexin repeat units lie at residues 3 to 72 (ATVS…VHAW), 74 to 146 (SRFE…GWVK), 153 to 223 (KSIK…AHHW), and 226 to 294 (DPGQ…VFWR).

It belongs to the annexin family. Giardin subunit alpha subfamily.

The protein resides in the cytoplasm. Its subcellular location is the cytoskeleton. Functionally, giardins are involved in parasite attachment to the intestinal mucosa and in the cytoskeletal disassembly and reassembly that marks the transition from infectious trophozoite to transmissible cyst. They may interact with other cytoskeletal proteins such as microtubules in the microribbons or crossbridges, to maintain the integrity of the ventral disk. In Giardia intestinalis (Giardia lamblia), this protein is Giardin subunit alpha-4.